Reading from the N-terminus, the 368-residue chain is Glycolate oxidase 3 (368 aa).

Met-1 is modified (N-acetylmethionine). The FMN hydroxy acid dehydrogenase domain occupies Met-1–Asp-359. Tyr-24 is a binding site for glyoxylate. FMN-binding positions include Pro-77–Ala-79, Ser-106, Gln-127–Tyr-129, and Thr-155. Residue Tyr-129 coordinates glyoxylate. Position 164 (Arg-164) interacts with glyoxylate. FMN-binding residues include Lys-230 and Ser-252. Glyoxylate is bound by residues His-254 and Arg-257. Catalysis depends on His-254, which acts as the Proton acceptor. FMN contacts are provided by residues Asp-285 to Arg-289 and Gly-308 to Arg-309.

Belongs to the FMN-dependent alpha-hydroxy acid dehydrogenase family. In terms of assembly, homotetramer. It depends on FMN as a cofactor.

Its subcellular location is the peroxisome. The catalysed reaction is glycolate + O2 = glyoxylate + H2O2. It participates in photosynthesis; photorespiration; glycine from 2-phosphoglycolate: step 2/3. Its function is as follows. Catalyzes the oxidation of glycolate to glyoxylate, with a reduction of O2 to H2O2. Is a key enzyme in photorespiration in green plants. The polypeptide is Glycolate oxidase 3 (GLO5) (Arabidopsis thaliana (Mouse-ear cress)).